We begin with the raw amino-acid sequence, 485 residues long: Protein nucleotidyltransferase YdiU (485 aa).

Positions 100, 102, 103, 123, 135, 136, 189, and 196 each coordinate ATP. Residue aspartate 265 is the Proton acceptor of the active site. Asparagine 266 and aspartate 275 together coordinate Mg(2+). Aspartate 275 contacts ATP.

The protein belongs to the SELO family. The cofactor is Mg(2+). Requires Mn(2+) as cofactor.

The enzyme catalyses L-seryl-[protein] + ATP = 3-O-(5'-adenylyl)-L-seryl-[protein] + diphosphate. It catalyses the reaction L-threonyl-[protein] + ATP = 3-O-(5'-adenylyl)-L-threonyl-[protein] + diphosphate. The catalysed reaction is L-tyrosyl-[protein] + ATP = O-(5'-adenylyl)-L-tyrosyl-[protein] + diphosphate. It carries out the reaction L-histidyl-[protein] + UTP = N(tele)-(5'-uridylyl)-L-histidyl-[protein] + diphosphate. The enzyme catalyses L-seryl-[protein] + UTP = O-(5'-uridylyl)-L-seryl-[protein] + diphosphate. It catalyses the reaction L-tyrosyl-[protein] + UTP = O-(5'-uridylyl)-L-tyrosyl-[protein] + diphosphate. Functionally, nucleotidyltransferase involved in the post-translational modification of proteins. It can catalyze the addition of adenosine monophosphate (AMP) or uridine monophosphate (UMP) to a protein, resulting in modifications known as AMPylation and UMPylation. The polypeptide is Protein nucleotidyltransferase YdiU (Trichormus variabilis (strain ATCC 29413 / PCC 7937) (Anabaena variabilis)).